The following is a 606-amino-acid chain: Scavenger receptor class A member 3 (606 aa).

Over 1–56 (MKVRSAGSDRDVLCVTEEDLAGEDEDMPSFPCTQEGRAGPRCNRCQKNLSLHTSVR) the chain is Cytoplasmic. A helical; Signal-anchor for type II membrane protein transmembrane segment spans residues 57-77 (ILYLFLTLLLVAVAVLASLVF). The Extracellular portion of the chain corresponds to 78-606 (RKVDSLSEDI…PGPPGNQSPY (529 aa)). 10 N-linked (GlcNAc...) asparagine glycosylation sites follow: asparagine 115, asparagine 182, asparagine 224, asparagine 257, asparagine 313, asparagine 337, asparagine 365, asparagine 400, asparagine 430, and asparagine 451. Residues 455–606 (IRGVPGPPGP…PGPPGNQSPY (152 aa)) form a disordered region. Collagen-like domains lie at 456–558 (RGVP…PGPS) and 559–601 (GPQG…GPPG). The segment covering 497–516 (PQGQPGEPGPVGERGPAGPR) has biased composition (low complexity). A compositionally biased stretch (gly residues) spans 526–535 (GSFGTGGPRG). Pro residues-rich tracts occupy residues 548 to 558 (PEGPPGSPGPS) and 591 to 606 (PGLP…QSPY).

The protein localises to the endoplasmic reticulum membrane. It localises to the golgi apparatus membrane. Its function is as follows. Seems to protect cells by scavenging oxidative molecules or harmful products of oxidation. The polypeptide is Scavenger receptor class A member 3 (Scara3) (Mus musculus (Mouse)).